Consider the following 242-residue polypeptide: Ubiquinone biosynthesis O-methyltransferase (242 aa).

Residues R36, G56, D77, and M130 each contribute to the S-adenosyl-L-methionine site.

This sequence belongs to the methyltransferase superfamily. UbiG/COQ3 family.

The catalysed reaction is a 3-demethylubiquinol + S-adenosyl-L-methionine = a ubiquinol + S-adenosyl-L-homocysteine + H(+). The enzyme catalyses a 3-(all-trans-polyprenyl)benzene-1,2-diol + S-adenosyl-L-methionine = a 2-methoxy-6-(all-trans-polyprenyl)phenol + S-adenosyl-L-homocysteine + H(+). Its pathway is cofactor biosynthesis; ubiquinone biosynthesis. Functionally, O-methyltransferase that catalyzes the 2 O-methylation steps in the ubiquinone biosynthetic pathway. In Pasteurella multocida (strain Pm70), this protein is Ubiquinone biosynthesis O-methyltransferase.